The sequence spans 518 residues: MALLTGNADRAFSSYSFNKLENLCEVQTKKGFFYRKAKLLHPDEDLCYLARLDDRTRFVIINVGGIKYKVPWTTLENCPLTRLGKLKSCNNYDEIMNICDDYDVSCNEFFFDRNPSAFRTIMTFLTAGKLRLLREMCALSFQEELVYWGIEEDHLEWCCKKRLQQKEEEAAEARMYEGEMMFSETTQCAFQDNNWLSLCMRNLRDMVENPHSGIPGKIFACISISFVAITAVSLCISTMPDVREEEDRGECSQKCYDIFVLETVCVAWFSFEFLLRSIQAENKCAFLKTPLNIIDILAILPFYISLIVDMASTKNSSKPGGGAGNKYLERVGLVLRFLRALRILYVMRLARHSLGLQTLGLTVRRCTREFGLLLLFLCVAMALFSPLVYLAESELGAKQEFTSIPTSYWWAVISMTTVGYGDMVPRSIPGQVVALSSILSGILLMAFPVTSIFHTFSRSYSELKEQQQRAASRQMHQLEESTKLAGGGSSQWITAASPPDAAREDGRPELDQEAKRSC.

Residues Met-1–Ile-214 lie on the Cytoplasmic side of the membrane. A helical membrane pass occupies residues Pro-215–Ile-236. At Ser-237–Asp-257 the chain is on the extracellular side. Residues Ile-258–Gln-279 traverse the membrane as a helical segment. Topologically, residues Ala-280–Pro-290 are cytoplasmic. Residues Leu-291–Ala-311 form a helical membrane-spanning segment. Residues Ser-312–Val-331 are Extracellular-facing. A helical; Voltage-sensor transmembrane segment spans residues Gly-332–His-352. At Ser-353–Thr-367 the chain is on the cytoplasmic side. A helical membrane pass occupies residues Arg-368 to Tyr-389. Residues Leu-390–Ile-404 are Extracellular-facing. The helical intramembrane region spans Pro-405 to Thr-416. The Selectivity filter motif lies at Thr-417–Asp-422. The stretch at Thr-417–Val-424 is an intramembrane region. The Extracellular portion of the chain corresponds to Pro-425–Gln-431. Residues Val-432 to Tyr-460 traverse the membrane as a helical segment. The Cytoplasmic segment spans residues Ser-461 to Cys-518. The segment at Arg-473–Cys-518 is disordered. Positions Ala-501–Cys-518 are enriched in basic and acidic residues.

It belongs to the potassium channel family. G (TC 1.A.1.2) subfamily. Kv6.2/KCNG2 sub-subfamily. Heterodimer with KCNB1.

It localises to the cell membrane. Regulatory alpha-subunit of the voltage-gated potassium (Kv) channel which, when coassembled with KCNB1, can modulate the kinetics and conductance-voltage relationship. Modulates channel activity by shifting the threshold and the half-maximal activation to more negative values. Potassium channel subunit that does not form functional channels by itself. The sequence is that of Voltage-gated potassium channel regulatory subunit KCNG2 from Gallus gallus (Chicken).